A 267-amino-acid polypeptide reads, in one-letter code: Phosphate import ATP-binding protein PstB (267 aa).

The ABC transporter domain occupies 21-262 (IEVKNLNFYY…PREKRTQDYI (242 aa)). 53–60 (GPSGCGKS) provides a ligand contact to ATP.

This sequence belongs to the ABC transporter superfamily. Phosphate importer (TC 3.A.1.7) family. As to quaternary structure, the complex is composed of two ATP-binding proteins (PstB), two transmembrane proteins (PstC and PstA) and a solute-binding protein (PstS).

It localises to the cell inner membrane. It catalyses the reaction phosphate(out) + ATP + H2O = ADP + 2 phosphate(in) + H(+). Functionally, part of the ABC transporter complex PstSACB involved in phosphate import. Responsible for energy coupling to the transport system. This Mesorhizobium japonicum (strain LMG 29417 / CECT 9101 / MAFF 303099) (Mesorhizobium loti (strain MAFF 303099)) protein is Phosphate import ATP-binding protein PstB.